The chain runs to 479 residues: Alliin lyase (479 aa).

The first 25 residues, 1–25 (MESYDKVGSNKVPCLLILTCIIMSS), serve as a signal peptide directing secretion. The propeptide occupies 26–34 (FVNNNIVQA). In terms of domain architecture, EGF-like; atypical spans 47-93 (EAVANINCSGHGRAFLDGILSDGSPKCECNTCYTGADCSEKITGCSA). Residue asparagine 53 is glycosylated (N-linked (GlcNAc...) asparagine). Cystine bridges form between cysteine 54/cysteine 73, cysteine 75/cysteine 84, and cysteine 78/cysteine 91. 126 to 134 (YFFNPVSNF) provides a ligand contact to chloride. N-linked (GlcNAc...) asparagine glycans are attached at residues asparagine 180 and asparagine 225. Lysine 285 carries the post-translational modification N6-(pyridoxal phosphate)lysine. 2 N-linked (GlcNAc...) asparagine glycosylation sites follow: asparagine 342 and asparagine 362. Cysteines 402 and 410 form a disulfide.

Belongs to the alliinase family. As to quaternary structure, homodimer. The cofactor is pyridoxal 5'-phosphate.

It localises to the vacuole. It carries out the reaction an S-alkyl-L-cysteine S-oxide = an S-alkyl sulfenate + 2-aminoprop-2-enoate. The sequence is that of Alliin lyase from Allium cepa (Onion).